A 155-amino-acid polypeptide reads, in one-letter code: Interleukin-2 (155 aa).

An N-terminal signal peptide occupies residues 1–20; sequence MYKMQLLSCIALMLVLVANS. A glycan (O-linked (GalNAc...) threonine) is linked at threonine 24. A disulfide bridge connects residues cysteine 79 and cysteine 127. Residue asparagine 112 is glycosylated (N-linked (GlcNAc...) asparagine).

Belongs to the IL-2 family.

It localises to the secreted. Its function is as follows. Cytokine produced by activated CD4-positive helper T-cells and to a lesser extend activated CD8-positive T-cells and natural killer (NK) cells that plays pivotal roles in the immune response and tolerance. Binds to a receptor complex composed of either the high-affinity trimeric IL-2R (IL2RA/CD25, IL2RB/CD122 and IL2RG/CD132) or the low-affinity dimeric IL-2R (IL2RB and IL2RG). Interaction with the receptor leads to oligomerization and conformation changes in the IL-2R subunits resulting in downstream signaling starting with phosphorylation of JAK1 and JAK3. In turn, JAK1 and JAK3 phosphorylate the receptor to form a docking site leading to the phosphorylation of several substrates including STAT5. This process leads to activation of several pathways including STAT, phosphoinositide-3-kinase/PI3K and mitogen-activated protein kinase/MAPK pathways. Functions as a T-cell growth factor and can increase NK-cell cytolytic activity as well. Promotes strong proliferation of activated B-cells and subsequently immunoglobulin production. Plays a pivotal role in regulating the adaptive immune system by controlling the survival and proliferation of regulatory T-cells, which are required for the maintenance of immune tolerance. Moreover, participates in the differentiation and homeostasis of effector T-cell subsets, including Th1, Th2, Th17 as well as memory CD8-positive T-cells. In Vulpes vulpes (Red fox), this protein is Interleukin-2 (IL2).